Here is a 453-residue protein sequence, read N- to C-terminus: Glutamyl-tRNA reductase (453 aa).

Residues 50–53, Ser110, 115–117, and Gln121 each bind substrate; these read TCNR and EPQ. Residue Cys51 is the Nucleophile of the active site. 190-195 lines the NADP(+) pocket; that stretch reads GAGEMA. Residues 423-436 are compositionally biased toward basic and acidic residues; the sequence is REKVPTDAHADRKP. The disordered stretch occupies residues 423–453; it reads REKVPTDAHADRKPPNFAETSDDFDVTDASE. The segment covering 442–453 has biased composition (acidic residues); that stretch reads TSDDFDVTDASE.

It belongs to the glutamyl-tRNA reductase family. In terms of assembly, homodimer.

The catalysed reaction is (S)-4-amino-5-oxopentanoate + tRNA(Glu) + NADP(+) = L-glutamyl-tRNA(Glu) + NADPH + H(+). It participates in porphyrin-containing compound metabolism; protoporphyrin-IX biosynthesis; 5-aminolevulinate from L-glutamyl-tRNA(Glu): step 1/2. Catalyzes the NADPH-dependent reduction of glutamyl-tRNA(Glu) to glutamate 1-semialdehyde (GSA). The polypeptide is Glutamyl-tRNA reductase (Solidesulfovibrio magneticus (strain ATCC 700980 / DSM 13731 / RS-1) (Desulfovibrio magneticus)).